The primary structure comprises 243 residues: ATP synthase subunit a (243 aa).

Helical transmembrane passes span 28–48 (SSLYMVLTVVFASLFLFAGVF), 52–72 (VIPGPMQSFVEIVCSFVLGII), 83–103 (YFPLILSVFLYVLFANLVGML), 114–134 (HIVVTLALAMVVFIFVTLIGL), 141–161 (FFAMFLPDGTPNWIAPLMIFL), 177–197 (LTANMIAGHTILKVIAGFVYP), 200–220 (LLISPLSFLFVVVLIVFEVFI), and 221–241 (AMLQAYIFVMLTCVYLNDSLF).

It belongs to the ATPase A chain family. F-type ATPases have 2 components, CF(1) - the catalytic core - and CF(0) - the membrane proton channel. CF(1) has five subunits: alpha(3), beta(3), gamma(1), delta(1), epsilon(1). CF(0) has three main subunits: a(1), b(2) and c(9-12). The alpha and beta chains form an alternating ring which encloses part of the gamma chain. CF(1) is attached to CF(0) by a central stalk formed by the gamma and epsilon chains, while a peripheral stalk is formed by the delta and b chains.

It is found in the cell inner membrane. Key component of the proton channel; it plays a direct role in the translocation of protons across the membrane. This Neorickettsia sennetsu (strain ATCC VR-367 / Miyayama) (Ehrlichia sennetsu) protein is ATP synthase subunit a.